The sequence spans 177 residues: dCTP deaminase, dUMP-forming (177 aa).

DCTP is bound by residues 98–103 (RSSVGR), N110, 115–118 (DPGF), 123–125 (TLE), Q144, 157–160 (YQGK), and Q164. Residue E125 is the Proton donor/acceptor of the active site.

This sequence belongs to the dCTP deaminase family. In terms of assembly, homotrimer. Mg(2+) is required as a cofactor.

It catalyses the reaction dCTP + 2 H2O = dUMP + NH4(+) + diphosphate. Its pathway is pyrimidine metabolism; dUMP biosynthesis; dUMP from dCTP: step 1/1. Inhibited by dTTP. In terms of biological role, bifunctional enzyme that catalyzes both the deamination of dCTP to dUTP and the hydrolysis of dUTP to dUMP without releasing the toxic dUTP intermediate. The protein is dCTP deaminase, dUMP-forming of Halalkalibacterium halodurans (strain ATCC BAA-125 / DSM 18197 / FERM 7344 / JCM 9153 / C-125) (Bacillus halodurans).